The chain runs to 268 residues: Secreted RxLR effector protein 32 (268 aa).

A signal peptide spans 1–21 (MRGAYYVAFALLVAASTRTAA). Residues 50-71 (RILRESPDPKDRLPVYASDEER) carry the RxLR-dEER motif. The segment at 120–257 (PKLEIKKSKR…PTPESLGIGG (138 aa)) is disordered. A compositionally biased stretch (low complexity) spans 148–161 (SNSKKSLVSSASAK). The span at 212-224 (NLDKNKRPDEAKI) shows a compositional bias: basic and acidic residues.

Belongs to the RxLR effector family.

The protein localises to the secreted. Its subcellular location is the host cell. In terms of biological role, secreted effector that completely suppresses the host cell death induced by cell death-inducing proteins. The polypeptide is Secreted RxLR effector protein 32 (Plasmopara viticola (Downy mildew of grapevine)).